A 516-amino-acid chain; its full sequence is Monocarboxylate transporter 12 (516 aa).

The Cytoplasmic segment spans residues 1–50; sequence MPSGSHWTANSSKIITWLLEQPGKEEKRKTMAKVNRARSTSPPDGGWGWM. 12 helical membrane passes run 51 to 73, 88 to 108, 116 to 136, 145 to 165, 178 to 198, 207 to 227, 283 to 303, 319 to 339, 350 to 370, 377 to 397, 410 to 430, and 440 to 460; these read IVAG…SIFF, AWIH…GSVV, VGIM…SFAT, LGVL…AMVG, IAMS…QLLI, LLIL…MRPI, FVVL…LFVY, AFLM…FGWL, YVCY…LPML, VPFS…IPVV, ALGV…PIAG, and TAAF…LGFA. The Cytoplasmic segment spans residues 461-516; the sequence is RLIKRMRKTQLQFIAKESDPKLQLWTNGSVAYSVARELDQKHGEPVATAVPGYSLT.

The protein belongs to the major facilitator superfamily. Monocarboxylate porter (TC 2.A.1.13) family. Interacts with isoform 2 of BSG; this interaction is required for its localization to the plasma membrane. As to expression, most highly expressed in kidney, followed by retina, lung, heart and testis. Very weakly expressed in brain and liver. Also detected in lens.

It is found in the cell membrane. The protein resides in the basolateral cell membrane. The enzyme catalyses creatine(in) = creatine(out). It catalyses the reaction guanidinoacetate(in) = guanidinoacetate(out). Its activity is regulated as follows. Creatine uptake is inhibited by carbonyl cyanide 3-chlorophenylhydrazone (CCCP) and by valinomycin. Functionally, functions as a transporter for creatine and as well for its precursor guanidinoacetate. Transport of creatine and GAA is independent of resting membrane potential and extracellular Na(+), Cl(-), or pH. Contributes to the process of creatine biosynthesis and distribution. In Homo sapiens (Human), this protein is Monocarboxylate transporter 12.